The primary structure comprises 140 residues: Putative nickel-responsive regulator 3 (140 aa).

Ni(2+) is bound by residues His81, His92, His94, and Cys100.

The protein belongs to the transcriptional regulatory CopG/NikR family. Ni(2+) is required as a cofactor.

In terms of biological role, transcriptional regulator. In Methanosarcina mazei (strain ATCC BAA-159 / DSM 3647 / Goe1 / Go1 / JCM 11833 / OCM 88) (Methanosarcina frisia), this protein is Putative nickel-responsive regulator 3.